Reading from the N-terminus, the 137-residue chain is Oleosin Ara h 11.0101 (137 aa).

Position 2 is an N-acetylalanine; alternate (A2). Helical transmembrane passes span 27 to 47 and 55 to 75; these read AVVA…GTVI and LFVI…LLGL.

Belongs to the oleosin family. Expressed in seeds (at protein level).

The protein localises to the lipid droplet. The protein resides in the membrane. May have a structural role to stabilize the lipid body during desiccation of the seed by preventing coalescence of the oil. Probably interacts with both lipid and phospholipid moieties of lipid bodies. May also provide recognition signals for specific lipase anchorage in lipolysis during seedling growth. The polypeptide is Oleosin Ara h 11.0101 (Arachis hypogaea (Peanut)).